A 272-amino-acid chain; its full sequence is Cell division protein FtsQ (272 aa).

At 1-20 (MSSYAPREIPLDIRLMQGTS) the chain is on the cytoplasmic side. The chain crosses the membrane as a helical span at residues 21-40 (RALFWLVALGCLFVAGHWLM). The Periplasmic portion of the chain corresponds to 41–272 (QRNWWDIRAV…KTPQPAGRKD (232 aa)). Residues 45-114 (WDIRAVRLQG…MQLAVTLQAQ (70 aa)) enclose the POTRA domain.

Belongs to the FtsQ/DivIB family. FtsQ subfamily. Part of a complex composed of FtsB, FtsL and FtsQ.

Its subcellular location is the cell inner membrane. Essential cell division protein. May link together the upstream cell division proteins, which are predominantly cytoplasmic, with the downstream cell division proteins, which are predominantly periplasmic. May control correct divisome assembly. The chain is Cell division protein FtsQ from Thiomonas arsenitoxydans (strain DSM 22701 / CIP 110005 / 3As).